Consider the following 368-residue polypeptide: tRNA/tmRNA (uracil-C(5))-methyltransferase (368 aa).

The S-adenosyl-L-methionine site is built by Gln-190, Tyr-218, Asn-223, Glu-239, and Asp-301. Catalysis depends on Cys-326, which acts as the Nucleophile. The active-site Proton acceptor is Glu-360.

It belongs to the class I-like SAM-binding methyltransferase superfamily. RNA M5U methyltransferase family. TrmA subfamily.

The catalysed reaction is uridine(54) in tRNA + S-adenosyl-L-methionine = 5-methyluridine(54) in tRNA + S-adenosyl-L-homocysteine + H(+). It carries out the reaction uridine(341) in tmRNA + S-adenosyl-L-methionine = 5-methyluridine(341) in tmRNA + S-adenosyl-L-homocysteine + H(+). In terms of biological role, dual-specificity methyltransferase that catalyzes the formation of 5-methyluridine at position 54 (m5U54) in all tRNAs, and that of position 341 (m5U341) in tmRNA (transfer-mRNA). The protein is tRNA/tmRNA (uracil-C(5))-methyltransferase of Photobacterium profundum (strain SS9).